The following is a 409-amino-acid chain: Forkhead box protein A2 (409 aa).

Positions 150–241 (AKPPYSYISL…GNMFENGCYL (92 aa)) form a DNA-binding region, fork-head. Over residues 250 to 262 (DKKLSKDPSRKTS) the composition is skewed to basic and acidic residues. The disordered stretch occupies residues 250 to 315 (DKKLSKDPSR…AASPTSQAQH (66 aa)). Positions 263-286 (EGGSNSSSESCNGNESPHSNSSSN) are enriched in low complexity.

The protein localises to the nucleus. Its function is as follows. May play a crucial role in specification of both the axial mesendoderm and the ventral nervous system. This is Forkhead box protein A2 (foxa2) from Danio rerio (Zebrafish).